Consider the following 262-residue polypeptide: MPAELSPIDTAKFAAARRAVDLVQDGMKLGLGTGSTAAWMVRCLAERVREEGLRVQGVPTSTRTAELARALGIQVVTLDEAKWLDLTIDGADEFDADFNLIKGGGAALLQEKIVATASDRMVVIADAAKEVAHLGAFPLPVEVIPFGWQSTKMLIEETLEGMDVLGREVTLRLSGDAPLLTDEKNYILDLHLKRIGEPRKLGLALNQIAGVVENGLFIDICDTVVVGHGDGRVSLRDLQSGQAEEGFIDMDRARNIFADLGD.

Substrate contacts are provided by residues 33–36 (TGST), 89–92 (DGAD), and 102–105 (KGGG). Glu-111 acts as the Proton acceptor in catalysis. Position 129 (Lys-129) interacts with substrate.

It belongs to the ribose 5-phosphate isomerase family. In terms of assembly, homodimer.

It carries out the reaction aldehydo-D-ribose 5-phosphate = D-ribulose 5-phosphate. It participates in carbohydrate degradation; pentose phosphate pathway; D-ribose 5-phosphate from D-ribulose 5-phosphate (non-oxidative stage): step 1/1. In terms of biological role, catalyzes the reversible conversion of ribose-5-phosphate to ribulose 5-phosphate. This is Ribose-5-phosphate isomerase A from Cereibacter sphaeroides (strain KD131 / KCTC 12085) (Rhodobacter sphaeroides).